Reading from the N-terminus, the 353-residue chain is Glucose import ATP-binding protein GlcV (353 aa).

Residues 4 to 241 (IIVKNVSKVF…PVSIQVASLI (238 aa)) form the ABC transporter domain. Residues 40–46 (SGAGKTT), glutamine 89, and glutamate 166 each bind ATP.

The protein belongs to the ABC transporter superfamily. As to quaternary structure, the complex is composed of two ATP-binding proteins (GlcV), two transmembrane proteins (GlcT and GlcU) and a solute-binding protein (GlcS). Forms transient head-to-tail homodimers in the presence of ATP-Mg(2+).

It localises to the cell membrane. The enzyme catalyses D-glucose(out) + ATP + H2O = D-glucose(in) + ADP + phosphate + H(+). Its function is as follows. Part of the ABC transporter complex GlcSTUV involved in glucose uptake. Responsible for energy coupling to the transport system. In vitro, as a free subunit, exhibits a constitutive ATPase activity. In Saccharolobus solfataricus (strain ATCC 35092 / DSM 1617 / JCM 11322 / P2) (Sulfolobus solfataricus), this protein is Glucose import ATP-binding protein GlcV.